The primary structure comprises 595 residues: Neuroepithelial cell-transforming gene 1 protein (595 aa).

At Met1 the chain carries N-acetylmethionine. Residues Met1–Glu42 are disordered. Positions Met1–Asp74 are necessary for nuclear localization. A Nuclear localization signal motif is present at residues Arg12–Arg19. Ser21 carries the post-translational modification Phosphoserine. The Nuclear localization signal motif lies at Lys66–Lys72. Phosphoserine is present on residues Ser100, Ser106, and Ser122. The disordered stretch occupies residues Gly127–Arg151. The segment covering Ala133–Thr146 has biased composition (polar residues). Positions Lys174 to Lys356 constitute a DH domain. Residues Val386–Ala501 form the PH domain. Ser508 is subject to Phosphoserine. Positions Cys555 to Val595 are disordered.

In terms of assembly, interacts with RHOA in its GTP- and GDP-bound states, and with CDC42 in its GTP-bound state. Interacts with the PDZ 1 domain of BAIAP1.

It is found in the cytoplasm. The protein resides in the nucleus. Functionally, acts as a guanine nucleotide exchange factor (GEF) for RhoA GTPase. May be involved in activation of the SAPK/JNK pathway. Stimulates genotoxic stress-induced RHOB activity in breast cancer cells leading to their cell death. This chain is Neuroepithelial cell-transforming gene 1 protein (Net1), found in Mus musculus (Mouse).